The chain runs to 317 residues: Adenosine receptor A3 (317 aa).

Over 1-14 (MPVNSTAVSWTSVT) the chain is Extracellular. The N-linked (GlcNAc...) asparagine glycan is linked to Asn4. Residues 15–37 (YITVEILIGLCAIVGNVLVIWVV) form a helical membrane-spanning segment. At 38–48 (KLNPSLQTTTF) the chain is on the cytoplasmic side. Residues 49-72 (YFIVSLALADIAVGVLVMPLAIVI) form a helical membrane-spanning segment. Residues 73–84 (SLGVTIHFYSCL) are Extracellular-facing. The cysteines at positions 83 and 165 are disulfide-linked. The helical transmembrane segment at 85–106 (FMTCLMLIFTHASIMSLLAIAV) threads the bilayer. Residues 107–126 (DRYLRVKLTVRYRRVTTQRR) are Cytoplasmic-facing. The chain crosses the membrane as a helical span at residues 127 to 148 (IWLALGLCWLVSFLVGLTPMFG). The Extracellular portion of the chain corresponds to 149–176 (WNMKLSSADENLTFLPCRFRSVMRMDYM). A glycan (N-linked (GlcNAc...) asparagine) is linked at Asn159. Residues 177-197 (VYFSFFLWILVPLVVMCAIYF) form a helical membrane-spanning segment. The Cytoplasmic segment spans residues 198–230 (DIFYIIRNRLSQSFSGSRETGAFYGREFKTAKS). Residues 231 to 254 (LLLVLFLFALCWLPLSIINCILYF) form a helical membrane-spanning segment. Over 255–260 (DGQVPQ) the chain is Extracellular. A helical transmembrane segment spans residues 261-283 (TVLYLGILLSHANSMMNPIVYAY). At 284-317 (KIKKFKETYLLILKACVMCQPSKSMDPSTEQTSE) the chain is on the cytoplasmic side. Cys302 carries S-palmitoyl cysteine lipidation.

It belongs to the G-protein coupled receptor 1 family. Post-translationally, phosphorylation on Thr-315 and Ser-316 may be crucial for rapid desensitization. Phosphorylation on Thr-315 may be necessary for phosphorylation on Ser-316 to occur. As to expression, most abundant in lung, spleen and pineal gland. Moderate expression in brain, kidney and testis.

The protein localises to the cell membrane. Its function is as follows. Receptor for adenosine. The activity of this receptor is mediated by G proteins which inhibits adenylyl cyclase. The polypeptide is Adenosine receptor A3 (ADORA3) (Ovis aries (Sheep)).